A 437-amino-acid chain; its full sequence is Aspartate aminotransferase, mitochondrial (437 aa).

Residues Gly72, Trp167, and Asn220 each coordinate L-aspartate. Residue Lys284 is modified to N6-(pyridoxal phosphate)lysine. An L-aspartate-binding site is contributed by Arg413.

It belongs to the class-I pyridoxal-phosphate-dependent aminotransferase family. In terms of assembly, homodimer. Requires pyridoxal 5'-phosphate as cofactor.

Its subcellular location is the mitochondrion matrix. It carries out the reaction L-aspartate + 2-oxoglutarate = oxaloacetate + L-glutamate. In terms of biological role, plays a key role in amino acid metabolism. Important for metabolite exchange between mitochondria and cytosol. The protein is Aspartate aminotransferase, mitochondrial of Schizosaccharomyces pombe (strain 972 / ATCC 24843) (Fission yeast).